Reading from the N-terminus, the 76-residue chain is cAMP-dependent protein kinase inhibitor alpha (76 aa).

Blocked amino end (Thr) is present on T2. The interval 49 to 76 (KAEGEGDAQRNPSEQTGEAQGEAAKQES) is disordered.

Belongs to the PKI family.

Its function is as follows. Extremely potent competitive inhibitor of cAMP-dependent protein kinase activity, this protein interacts with the catalytic subunit of the enzyme after the cAMP-induced dissociation of its regulatory chains. This is cAMP-dependent protein kinase inhibitor alpha (PKIA) from Gallus gallus (Chicken).